We begin with the raw amino-acid sequence, 148 residues long: Truncated transcription factor CAULIFLOWER D (148 aa).

The region spanning 1–61 (MGRGRVEMKR…GKLFEYSSES (61 aa)) is the MADS-box domain. Positions 90–148 (QTNWSMEYSRLKAKIELWERNQRHYLGEDLESISIKELQNLEQQLDTSLKHIRSRKVCK) constitute a K-box; partial domain.

As to quaternary structure, homodimer capable of binding to CArG-box sequences.

The protein localises to the nucleus. Probable transcription factor that promotes early floral meristem identity in synergy with APETALA1, FRUITFULL and LEAFY. Is required subsequently for the transition of an inflorescence meristem into a floral meristem. Seems to be partially redundant to the function of APETALA1. The polypeptide is Truncated transcription factor CAULIFLOWER D (CAL-D) (Brassica oleracea var. botrytis (Cauliflower)).